A 1384-amino-acid polypeptide reads, in one-letter code: ABC transporter C family member 2 (1384 aa).

The ABC transmembrane type-1 1 domain occupies 104 to 388 (NKISVATKIF…LPEAIHRALS (285 aa)). Helical transmembrane passes span 112–132 (IFVA…IYYI), 140–160 (TFKF…SLTL), 226–246 (IFVF…IVGL), 247–267 (SGLV…FLST), and 333–353 (MITQ…YALT). An ABC transporter 1 domain is found at 505–724 (IEYDGAVQPS…GIDFESIMKT (220 aa)). Residue 537-544 (GIVGSGKT) participates in ATP binding. Residues 729–756 (IDENDQSSTSTTDKKSSTSSSSSELKKS) form a disordered region. A compositionally biased stretch (low complexity) spans 735 to 756 (SSTSTTDKKSSTSSSSSELKKS). 5 consecutive transmembrane segments (helical) span residues 813 to 833 (LFFL…LSDF), 852 to 872 (ILYY…RYFM), 941 to 961 (LFMM…LVVV), 1036 to 1056 (GIRL…SSLF), and 1061 to 1081 (GFSV…NWTI). Positions 814-1093 (FFLTCALYFI…MTELEVKMNS (280 aa)) constitute an ABC transmembrane type-1 2 domain. The ABC transporter 2 domain occupies 1137–1371 (VEFKNVEIKY…EGSRFKKLVK (235 aa)). 1171-1178 (GRTGAGKS) provides a ligand contact to ATP.

It belongs to the ABC transporter superfamily. ABCC family. Conjugate transporter (TC 3.A.1.208) subfamily.

Its subcellular location is the membrane. The protein is ABC transporter C family member 2 (abcC2) of Dictyostelium discoideum (Social amoeba).